The primary structure comprises 337 residues: 4-hydroxyproline 2-epimerase (337 aa).

Cys91 functions as the Proton acceptor in the catalytic mechanism. Residues 92–93 (GH), Asp252, and 257–258 (GT) each bind substrate.

This sequence belongs to the proline racemase family.

The enzyme catalyses trans-4-hydroxy-L-proline = cis-4-hydroxy-D-proline. Catalyzes the epimerization of trans-4-hydroxy-L-proline (t4LHyp) to cis-4-hydroxy-D-proline (c4DHyp). Is likely involved in a degradation pathway that converts t4LHyp to alpha-ketoglutarate. Displays no proline racemase activity. The polypeptide is 4-hydroxyproline 2-epimerase (Cereibacter sphaeroides (strain ATCC 17029 / ATH 2.4.9) (Rhodobacter sphaeroides)).